Reading from the N-terminus, the 366-residue chain is MPRSPHPPRRATLASLAAELKVSRTTISNAYNRPDQLSADLRERIFDAAKRLGYPGPDPVARSLRTRKAGAVGLMITEPLDYSFSDPAALDFVAGLAESCEEAGQGLLLVAVGPNRTFEEGSNSVLAAGVDGFVVYSASDDDPYLPVLQQRQLPMVVVDQPKDVPGVSRISIDDRGAMRELAEYVLELGHRDIGLLTMRLGRDWPHGDPRPALADPERVLSPHFHVQRERIHGVYDAMSAAGLDPSSLTVVESYEHLPTSGGAAAEVALEVNPRITALMCTADVLALSAMDHLRSRGIYVPGHMTVTGFDGVRDALRRGLTTVKQPSMEKGRRAGHLLHNPPGSGLPVIDVLETEVVRGRTSGPPA.

Residues 11–66 enclose the HTH lacI-type domain; sequence ATLASLAAELKVSRTTISNAYNRPDQLSADLRERIFDAAKRLGYPGPDPVARSLRT. Residues 13 to 32 constitute a DNA-binding region (H-T-H motif); sequence LASLAAELKVSRTTISNAYN.

Functionally, transcriptional regulator that negatively regulates transcription of the mce4 operon, which is involved in cholesterol transport and utilization. Acts by binding to the promoter region of the mce4 operon. The sequence is that of HTH-type transcriptional regulator MSMEG_6044/MSMEI_5883 from Mycolicibacterium smegmatis (strain ATCC 700084 / mc(2)155) (Mycobacterium smegmatis).